We begin with the raw amino-acid sequence, 821 residues long: MILPMSSACLGQFLRASPRGMIEQFNRAPPLRVSIRGAAGVEKSLGLGRNAGSQQGMQKNQLQDKIRKQLREVQLSPSSYDTAWVAMVPVQGSHQTPRFPQCIEWILQNQHDDGSWGTNLPGSVVNKDILLCTLACVVALKRWNTGRDHISRGLNFIGKNFWVAMDEQTIAPVGFNITFSGLLNLATGTGLEFPVMQTDIDGIFHMRKIELERDAYGTASSRRAFMAYVSEGLGSLQDWDQVMAYQRKNRSIFNSPSAAAATVIHGHNDSALCYLDSLVSKLDGPVPVMYPQNAYSQLGMVDTLEKMGISNNFSCEISDILDMIYRLWIHNEEELMLDMGTCAMAFRLLRMHGYDISSDGMAQFVEQSSFDDSIHGYLNDTKALLELYRSSQIRCLEDDLILQDIGSWSARVLQEKISSKMTHKSEMLEVEYALKFPVYATLERLEQKRNIEQFKTKEQLKIEGFKLLKSGYRGAITHDEILALAVDEFHSSQSVYQQELQDLNSWVAQTRLDELKFARLMPSITYFSAAATMFPSELSEARIAWTQNCILTTTVDDFFDGDGSKEEMENLVKLIEKWDGHGEIGFSSECVEILFYAIYNTSKQIAEKAVPLQKRNVVDHIAESWWFTVRGMLTEAEWRMDKYVPTTVEEYMSAAVDSFALGPTITSAALFVGPELSEEVFRSKEYIHLMNLANTIGRLLNDMQTYEKEIKMGKVNSVMLHALSHSGGGRGSPEASMEEAKREMRRVLQGSRCDLLRLVTRDGGVVPPPCRKLFWFMSKVLHFVYMEKDGYFTADGMMASANAVILDPLQVTLLPSGLGTL.

The Mg(2+) site is built by aspartate 556, aspartate 560, asparagine 701, threonine 705, and glutamate 709. Positions 556–560 (DDFFD) match the DDXXD motif motif.

Belongs to the terpene synthase family. The cofactor is Mg(2+). Highly expressed in roots, at intermediate levels in stems and at lower levels in leaves.

The catalysed reaction is ent-copalyl diphosphate = ent-pimara-8(14),15-diene + diphosphate. It functions in the pathway secondary metabolite biosynthesis; terpenoid biosynthesis. In terms of biological role, involved in the biosynthesis of ent-kaurene diterpenoids natural products. Catalyzes the conversion of ent-copalyl diphosphate to ent-pimara-8(14),15-diene. The sequence is that of Ent-pimara-8(14),15-diene synthase from Oryza sativa subsp. japonica (Rice).